The following is a 92-amino-acid chain: Acylphosphatase (92 aa).

Residues 5-92 (CIAAYVYGVV…TPFETFKIRY (88 aa)) enclose the Acylphosphatase-like domain. Residues Arg-20 and Asn-38 contribute to the active site.

The protein belongs to the acylphosphatase family.

It catalyses the reaction an acyl phosphate + H2O = a carboxylate + phosphate + H(+). The chain is Acylphosphatase (acyP) from Yersinia enterocolitica serotype O:8 / biotype 1B (strain NCTC 13174 / 8081).